Consider the following 401-residue polypeptide: Argininosuccinate synthase (401 aa).

ATP-binding positions include 11–19 (AYSGGLDTS) and alanine 38. L-citrulline is bound by residues tyrosine 89 and serine 94. Position 119 (glycine 119) interacts with ATP. The L-aspartate site is built by threonine 121, asparagine 125, and aspartate 126. Asparagine 125 is an L-citrulline binding site. 5 residues coordinate L-citrulline: arginine 129, serine 180, serine 189, glutamate 265, and tyrosine 277.

It belongs to the argininosuccinate synthase family. Type 1 subfamily. As to quaternary structure, homotetramer.

It is found in the cytoplasm. The enzyme catalyses L-citrulline + L-aspartate + ATP = 2-(N(omega)-L-arginino)succinate + AMP + diphosphate + H(+). It functions in the pathway amino-acid biosynthesis; L-arginine biosynthesis; L-arginine from L-ornithine and carbamoyl phosphate: step 2/3. In Syntrophus aciditrophicus (strain SB), this protein is Argininosuccinate synthase.